The chain runs to 2645 residues: Non-reducing polyketide synthase AC (2645 aa).

Positions 73 to 2366 (ALQNLNEWLK…TDIVHNAWPM (2294 aa)) are N-terminal acylcarrier protein transacylase domain (SAT). Residue His-260 is the Proton donor/acceptor; for transacylase activity of the active site. Positions 416 to 834 (DDKIAVIGMA…GSNSSLVVTE (419 aa)) constitute a Ketosynthase family 3 (KS3) domain. Catalysis depends on for beta-ketoacyl synthase activity residues Cys-583, His-718, and His-757. Residues 943-1252 (CFGGQISTYI…HAVSITTDKS (310 aa)) are malonyl-CoA:ACP transacylase (MAT) domain. The tract at residues 1324–1457 (SKGFTSFAGY…GVCSFCSATD (134 aa)) is N-terminal hotdog fold. The PKS/mFAS DH domain maps to 1324 to 1637 (SKGFTSFAGY…YNKVPLPVMR (314 aa)). Positions 1330–1641 (FAGYIDGNQR…PLPVMRGILG (312 aa)) are product template (PT) domain. Residue His-1359 is the Proton acceptor; for dehydratase activity of the active site. Residues 1487–1637 (NIMQGTANIY…YNKVPLPVMR (151 aa)) form a C-terminal hotdog fold region. Asp-1542 serves as the catalytic Proton donor; for dehydratase activity. Polar residues predominate over residues 1684–1696 (NGTTGTENPQIKS). Residues 1684–1716 (NGTTGTENPQIKSKTNKVKKVPTRKSGGSDLET) are disordered. The span at 1697–1706 (KTNKVKKVPT) shows a compositional bias: basic residues. The Carrier domain maps to 1711–1788 (GSDLETPAKT…SLVKYIREIR (78 aa)). Residue Ser-1748 is modified to O-(pantetheine 4'-phosphoryl)serine. Over residues 1794–1805 (QNVDDSESESEE) the composition is skewed to acidic residues. The tract at residues 1794 to 1816 (QNVDDSESESEELQQQATPIDSA) is disordered. The active-site For methyltransferase activity is Tyr-2009. Residues 2023–2197 (EVFVEKIGSS…SVGYGHVDWT (175 aa)) form a methyltransferase (CMeT) domain region. Positions 2269–2573 (CVLITGATGS…NIIPFYDWVQ (305 aa)) are NADPH-binding (R) domain.

The protein operates within mycotoxin biosynthesis. Functionally, non-reducing polyketide synthase; part of the gene cluster that mediates the biosynthesis of the selective antifungal agent ascochitine, an o-quinone methide that plays a possible protective role against other microbial competitors in nature and is considered to be important for pathogenicity of legume-associated Didymella species. The pathway probably begins with the synthesis of a keto-aldehyde intermediate by the ascochitine non-reducing polyketide synthase pksAC from successive condensations of 4 malonyl-CoA units, presumably with a simple acetyl-CoA starter unit. Release of the keto-aldehyde intermediate is consistent with the presence of the C-terminal reductive release domain. The HR-PKS (orf7) probably makes a diketide starter unit which is passed to the non-reducing polyketide synthase pksAC for further extension, producing ascochital and ascochitine. The aldehyde dehydrogenase (orf1), the 2-oxoglutarate-dependent dioxygenase (orf3) and the dehydrogenase (orf9) are probably involved in subsequent oxidations of methyl groups to the carboxylic acid of the heterocyclic ring. The ascochitine gene cluster also includes a gene encoding a short peptide (orf2) that is often found in secondary metabolite gene clusters and which function has still to be determined. This Didymella fabae (Leaf and pod spot disease fungus) protein is Non-reducing polyketide synthase AC.